A 205-amino-acid chain; its full sequence is Probable GTP-binding protein EngB (205 aa).

The EngB-type G domain maps to 27-201 (SGIEIAFAGR…AAKLDSWFAP (175 aa)). GTP contacts are provided by residues 35–42 (GRSNAGKS), 62–66 (GRTQL), 80–83 (DLPG), 147–150 (TKAD), and 180–182 (FSA). 2 residues coordinate Mg(2+): Ser-42 and Thr-64.

The protein belongs to the TRAFAC class TrmE-Era-EngA-EngB-Septin-like GTPase superfamily. EngB GTPase family. The cofactor is Mg(2+).

Necessary for normal cell division and for the maintenance of normal septation. The sequence is that of Probable GTP-binding protein EngB from Pasteurella multocida (strain Pm70).